The sequence spans 211 residues: LexA repressor (211 aa).

The segment at residues 35-55 (RAEIANFFGFKSANAAEEHLK) is a DNA-binding region (H-T-H motif). Catalysis depends on for autocatalytic cleavage activity residues Ser-128 and Lys-165.

Belongs to the peptidase S24 family. Homodimer.

The catalysed reaction is Hydrolysis of Ala-|-Gly bond in repressor LexA.. In terms of biological role, represses a number of genes involved in the response to DNA damage (SOS response), including recA and lexA. In the presence of single-stranded DNA, RecA interacts with LexA causing an autocatalytic cleavage which disrupts the DNA-binding part of LexA, leading to derepression of the SOS regulon and eventually DNA repair. This chain is LexA repressor, found in Colwellia psychrerythraea (strain 34H / ATCC BAA-681) (Vibrio psychroerythus).